Consider the following 533-residue polypeptide: Ribonuclease III domain-containing protein RNC1, chloroplastic (533 aa).

Residues 1-30 (MAPPAMAFQALALGPLPLPLPAARRRRRVR) constitute a chloroplast transit peptide. 2 disordered regions span residues 31-57 (VLAV…NSPS) and 66-85 (RKKA…ILKP). A compositionally biased stretch (pro residues) spans 39 to 53 (TPPPPPSPSSPPEPA). Positions 69–82 (AVSPKKKHPPRRFI) are enriched in basic residues. 2 RNase III domains span residues 164 to 279 (LLYL…LCFG) and 411 to 511 (EHPR…CVYG).

Interacts with RNA. Part of large ribonucleo-protein particles that contain CAF1 and/or CAF2.

The protein localises to the plastid. Its subcellular location is the chloroplast. In terms of biological role, binds specific group II introns in chloroplasts and facilitates their splicing. Acts on both subgroup IIA and subgroup IIB introns. The substrates of the subgroup II also require the CRM domain proteins CAF1 or CAF2. Binds both single-stranded and double-stranded RNA non-specifically, but lacks endonuclease activity. Required for plastid ribosome biogenesis. The protein is Ribonuclease III domain-containing protein RNC1, chloroplastic of Oryza sativa subsp. japonica (Rice).